Reading from the N-terminus, the 208-residue chain is Protein GrpE (208 aa).

Over residues 1 to 12 (MTNKDESVKKNT) the composition is skewed to basic and acidic residues. The segment at 1–51 (MTNKDESVKKNTESTVEETNVKQNIDDSVEQAEESKGHLQDEAIEETSDEN) is disordered. Over residues 13–23 (ESTVEETNVKQ) the composition is skewed to polar residues. Over residues 42 to 51 (EAIEETSDEN) the composition is skewed to acidic residues.

Belongs to the GrpE family. In terms of assembly, homodimer.

It localises to the cytoplasm. In terms of biological role, participates actively in the response to hyperosmotic and heat shock by preventing the aggregation of stress-denatured proteins, in association with DnaK and GrpE. It is the nucleotide exchange factor for DnaK and may function as a thermosensor. Unfolded proteins bind initially to DnaJ; upon interaction with the DnaJ-bound protein, DnaK hydrolyzes its bound ATP, resulting in the formation of a stable complex. GrpE releases ADP from DnaK; ATP binding to DnaK triggers the release of the substrate protein, thus completing the reaction cycle. Several rounds of ATP-dependent interactions between DnaJ, DnaK and GrpE are required for fully efficient folding. This Staphylococcus aureus (strain COL) protein is Protein GrpE.